The sequence spans 916 residues: Translation initiation factor IF-2 (916 aa).

A disordered region spans residues 1–325 (MTDSNDDKTL…QEKFRRSQVQ (325 aa)). Positions 60–91 (ITPATPAAPVRAAEPAPAPAQARPQQSTPAPR) are enriched in low complexity. Positions 97-108 (GQANQRPQQSYQ) are enriched in polar residues. Residues 125 to 182 (SPEEMDARRRALAESQARDAQDAIRRAEEEKRRAAEEAVRKAAEAEEAARRAVEEAAR) are compositionally biased toward basic and acidic residues. Composition is skewed to low complexity over residues 183–209 (QAEAAAAAAAEPAVTAPAPAPVTAEAR) and 229–243 (DGAAARPAPGAPAAV). In terms of domain architecture, tr-type G spans 414–581 (SRPPVVTIMG…AVLLQAEILD (168 aa)). Residues 423 to 430 (GHVDHGKT) are G1. GTP is bound at residue 423 to 430 (GHVDHGKT). Positions 448–452 (GITQH) are G2. The tract at residues 469–472 (DTPG) is G3. Residues 469 to 473 (DTPGH) and 523 to 526 (NKID) each bind GTP. The interval 523–526 (NKID) is G4. The tract at residues 559–561 (SAK) is G5.

This sequence belongs to the TRAFAC class translation factor GTPase superfamily. Classic translation factor GTPase family. IF-2 subfamily.

It localises to the cytoplasm. Its function is as follows. One of the essential components for the initiation of protein synthesis. Protects formylmethionyl-tRNA from spontaneous hydrolysis and promotes its binding to the 30S ribosomal subunits. Also involved in the hydrolysis of GTP during the formation of the 70S ribosomal complex. This Rhizobium etli (strain ATCC 51251 / DSM 11541 / JCM 21823 / NBRC 15573 / CFN 42) protein is Translation initiation factor IF-2.